The primary structure comprises 692 residues: Protein arginine N-methyltransferase 7 (692 aa).

SAM-dependent MTase PRMT-type domains follow at residues 14-359 (ENSW…YSLW) and 368-692 (AKTV…QEKR).

Belongs to the class I-like SAM-binding methyltransferase superfamily. Protein arginine N-methyltransferase family. PRMT7 subfamily.

Its function is as follows. Essential arginine methyltransferase that can both catalyze the formation of omega-N monomethylarginine (MMA) and symmetrical dimethylarginine (sDMA). Specifically mediates the symmetrical dimethylation of arginine residues in the small nuclear ribonucleoproteins SmD1 and SmD3. The chain is Protein arginine N-methyltransferase 7 (Art7) from Drosophila pseudoobscura pseudoobscura (Fruit fly).